The primary structure comprises 269 residues: Tryptophan synthase alpha chain (269 aa).

Active-site proton acceptor residues include Glu-54 and Asp-65.

The protein belongs to the TrpA family. In terms of assembly, tetramer of two alpha and two beta chains.

The catalysed reaction is (1S,2R)-1-C-(indol-3-yl)glycerol 3-phosphate + L-serine = D-glyceraldehyde 3-phosphate + L-tryptophan + H2O. It functions in the pathway amino-acid biosynthesis; L-tryptophan biosynthesis; L-tryptophan from chorismate: step 5/5. In terms of biological role, the alpha subunit is responsible for the aldol cleavage of indoleglycerol phosphate to indole and glyceraldehyde 3-phosphate. The chain is Tryptophan synthase alpha chain from Synechococcus sp. (strain CC9902).